Here is a 235-residue protein sequence, read N- to C-terminus: Protein transport protein bos1 (235 aa).

Residues 1-213 (MSNTLYNHCT…LINRRSKQDK (213 aa)) are Cytoplasmic-facing. The helical; Anchor for type IV membrane protein transmembrane segment at 214–234 (IIFYCGAFLVFVLFYLIYRWL) threads the bilayer. Position 235 (arginine 235) is a topological domain, vesicular.

This sequence belongs to the BOS1 family. As to quaternary structure, component of a SNARE complex consisting of sed5, bos1, bet1 and sec22 or ykt6. Interacts with YIF1 and YIP1.

It localises to the golgi apparatus membrane. Its subcellular location is the endoplasmic reticulum membrane. Functionally, SNARE required for targeting and fusion of ER-derived transport vesicles with the Golgi complex. The protein is Protein transport protein bos1 (bos1) of Schizosaccharomyces pombe (strain 972 / ATCC 24843) (Fission yeast).